The sequence spans 49 residues: Defensin Tk-AMP-D2 (49 aa).

4 disulfides stabilise this stretch: Cys3/Cys49, Cys14/Cys34, Cys20/Cys43, and Cys24/Cys45.

Its function is as follows. Plant defense peptide. In Triticum kiharae (Wheat), this protein is Defensin Tk-AMP-D2.